The sequence spans 414 residues: Alanine--glyoxylate aminotransferase (414 aa).

Residues 1–23 constitute a mitochondrion transit peptide; sequence MFRALARASATLGPQVAGWARTM. K231 carries the post-translational modification N6-(pyridoxal phosphate)lysine. K247 bears the N6-acetyllysine; alternate mark. An N6-succinyllysine; alternate modification is found at K247. N6-acetyllysine is present on residues K256 and K334. Residue R382 participates in substrate binding. Positions 412 to 414 match the Microbody targeting signal motif; that stretch reads NKL.

This sequence belongs to the class-V pyridoxal-phosphate-dependent aminotransferase family. Homodimer. Pyridoxal 5'-phosphate serves as cofactor.

The protein resides in the peroxisome. Its subcellular location is the mitochondrion matrix. The enzyme catalyses L-serine + pyruvate = 3-hydroxypyruvate + L-alanine. It carries out the reaction glyoxylate + L-alanine = glycine + pyruvate. In terms of biological role, catalyzes the transamination of glyoxylate to glycine and contributes to the glyoxylate detoxification. Functionally, catalyzes the transamination between L-serine and pyruvate and contributes to gluconeogenesis from the L-serine metabolism. The sequence is that of Alanine--glyoxylate aminotransferase from Felis catus (Cat).